A 468-amino-acid polypeptide reads, in one-letter code: Probable Xaa-Pro aminopeptidase PEPP (468 aa).

4 residues coordinate Mn(2+): Asp-264, Asp-275, Glu-398, and Glu-438.

It belongs to the peptidase M24B family. It depends on Mn(2+) as a cofactor.

The catalysed reaction is Release of any N-terminal amino acid, including proline, that is linked to proline, even from a dipeptide or tripeptide.. Functionally, catalyzes the removal of a penultimate prolyl residue from the N-termini of peptides. This is Probable Xaa-Pro aminopeptidase PEPP (PEPP) from Ajellomyces dermatitidis (strain ER-3 / ATCC MYA-2586) (Blastomyces dermatitidis).